Reading from the N-terminus, the 220-residue chain is Deoxyribose-phosphate aldolase (220 aa).

The active-site Proton donor/acceptor is Asp-89. The active-site Schiff-base intermediate with acetaldehyde is the Lys-151. Residue Lys-180 is the Proton donor/acceptor of the active site.

This sequence belongs to the DeoC/FbaB aldolase family. DeoC type 1 subfamily.

It localises to the cytoplasm. The enzyme catalyses 2-deoxy-D-ribose 5-phosphate = D-glyceraldehyde 3-phosphate + acetaldehyde. Its pathway is carbohydrate degradation; 2-deoxy-D-ribose 1-phosphate degradation; D-glyceraldehyde 3-phosphate and acetaldehyde from 2-deoxy-alpha-D-ribose 1-phosphate: step 2/2. In terms of biological role, catalyzes a reversible aldol reaction between acetaldehyde and D-glyceraldehyde 3-phosphate to generate 2-deoxy-D-ribose 5-phosphate. This is Deoxyribose-phosphate aldolase from Staphylococcus epidermidis (strain ATCC 35984 / DSM 28319 / BCRC 17069 / CCUG 31568 / BM 3577 / RP62A).